Here is a 172-residue protein sequence, read N- to C-terminus: Protein-export protein SecB (172 aa).

This sequence belongs to the SecB family. Homotetramer, a dimer of dimers. One homotetramer interacts with 1 SecA dimer.

It localises to the cytoplasm. Its function is as follows. One of the proteins required for the normal export of preproteins out of the cell cytoplasm. It is a molecular chaperone that binds to a subset of precursor proteins, maintaining them in a translocation-competent state. It also specifically binds to its receptor SecA. The protein is Protein-export protein SecB of Stenotrophomonas maltophilia (strain K279a).